Consider the following 325-residue polypeptide: Olfactory receptor 14L1 (325 aa).

At 1–43 (MAQFNKNQLIACRRNGTTTSDFNQTEVAEFFLMGFSNSWDIQI) the chain is on the extracellular side. Residues 44–64 (VHAALFFLVYLAAVIGNLLII) form a helical membrane-spanning segment. At 65 to 72 (ILTTLDVH) the chain is on the cytoplasmic side. Residues 73 to 93 (LQTPMYFFLRNLSFLDFCYIS) traverse the membrane as a helical segment. At 94–117 (VTIPKSIVSSLTHDTSISFFGCAL) the chain is on the extracellular side. Residues 118–138 (QAFFFMDLATTEVAILTVMSY) traverse the membrane as a helical segment. The Cytoplasmic portion of the chain corresponds to 139–151 (DRYMAICRPLHYE). Residues 152–172 (VIINQGVCLRMMAMSWLSGVI) form a helical membrane-spanning segment. The Extracellular portion of the chain corresponds to 173 to 214 (CGFMHVIATFSLPFCGRNRIRQFFCNIPQLLSLLDPKVITIE). A helical transmembrane segment spans residues 215–235 (IGVMVFGTSLVIISFVVITLS). Over 236–255 (YMYIFSVIMRIPSKEGRSKT) the chain is Cytoplasmic. The helical transmembrane segment at 256 to 276 (FSTCIPHLVVVTLFMISGSIA) threads the bilayer. Residues 277-289 (YVKPISNSPPVLD) are Extracellular-facing. A helical membrane pass occupies residues 290–310 (VFLSAFYTVVPPTLNPVIYSL). The Cytoplasmic segment spans residues 311-325 (RNRDMKAALRRQCGP).

The protein belongs to the G-protein coupled receptor 1 family.

The protein resides in the cell membrane. Its function is as follows. Odorant receptor. In Homo sapiens (Human), this protein is Olfactory receptor 14L1.